Consider the following 1223-residue polypeptide: RNA-binding protein 20 (1223 aa).

Disordered stretches follow at residues 1-59, 238-288, and 306-381; these read MVLA…QAGL, QAYG…PTSQ, and GEVG…GARR. A compositionally biased stretch (pro residues) spans 29-57; that stretch reads APAPPAPPGPRGMQPPPPPPPPPPPPPQA. Composition is skewed to polar residues over residues 238-261 and 314-331; these read QAYG…SGSV and GPNS…QSKP. A U1-type zinc finger spans residues 410–444; it reads HLPHICSICDKKVFDLKDWELHVKGKLHAQKCLLF. The region spanning 520 to 595 is the RRM domain; the sequence is RVVHICNLPE…EKLLIRMSKR (76 aa). Over residues 626–636 the composition is skewed to basic and acidic residues; that stretch reads EADRYGPERPR. Disordered regions lie at residues 626–902, 971–995, and 1042–1102; these read EADR…TNME, EISL…DVEM, and MSSP…STQE. Residues 630-657 form an RS region; that stretch reads YGPERPRSRSPVSRSLSPRSHTPSFTSC. Serine 637, serine 639, serine 642, serine 644, serine 662, and serine 681 each carry phosphoserine. Residues 638 to 662 show a composition bias toward low complexity; sequence RSPVSRSLSPRSHTPSFTSCSSSHS. 2 stretches are compositionally biased toward basic and acidic residues: residues 676–711 and 718–737; these read DSWE…MWAH and RQVD…GYRE. Positions 742-752 are enriched in low complexity; that stretch reads SGSPSSLHSVS. Phosphoserine is present on serine 744. Basic and acidic residues-rich tracts occupy residues 755–774 and 786–852; these read KSRE…DKYL and RKDE…KEEQ. Serine 803, serine 861, serine 872, serine 887, serine 889, serine 973, serine 976, and serine 1044 each carry phosphoserine. A compositionally biased stretch (basic and acidic residues) spans 864–884; the sequence is RQEKETESSDAENTRTRKEQD. Positions 1083 to 1102 are enriched in polar residues; it reads STPTETDLQSQACQGVSTQE. Phosphoserine is present on residues serine 1111 and serine 1116. The Matrin-type zinc-finger motif lies at 1157–1188; that stretch reads FYCKLCGLFYTSEEMAKMSHCRSAVHYRNLQK. Positions 1197–1223 are disordered; sequence GLKETEGAGSPRPEDSGIVPHFERKKL. The residue at position 1206 (serine 1206) is a Phosphoserine.

In terms of assembly, associates with components of the U1 and U2 U1 small nuclear ribonucleoprotein complexes. Phosphorylation regulates the subcellular localization. Phosphorylation of Ser-637 and Ser-639 in the RS (arginine/serine-rich) region promotes nuclear localization of the protein. In contrast, phosphorylation of the C-terminal disordered region promotes localization to cytoplasmic ribonucleoprotein granules.

It is found in the nucleus. The protein localises to the cytoplasm. It localises to the cytoplasmic ribonucleoprotein granule. In terms of biological role, RNA-binding protein that acts as a regulator of mRNA splicing of a subset of genes encoding key structural proteins involved in cardiac development, such as TTN (Titin), CACNA1C, CAMK2D or PDLIM5/ENH. Acts as a repressor of mRNA splicing: specifically binds the 5'UCUU-3' motif that is predominantly found within intronic sequences of pre-mRNAs, leading to the exclusion of specific exons in target transcripts. RBM20-mediated exon skipping is hormone-dependent and is essential for TTN isoform transition in both cardiac and skeletal muscles. RBM20-mediated exon skipping of TTN provides substrates for the formation of circular RNA (circRNAs) from the TTN transcripts. Together with RBM24, promotes the expression of short isoforms of PDLIM5/ENH in cardiomyocytes. The chain is RNA-binding protein 20 from Sus scrofa (Pig).